The primary structure comprises 242 residues: ATP-dependent dethiobiotin synthetase BioD (242 aa).

Glutamate 12–valine 17 provides a ligand contact to ATP. Threonine 16 provides a ligand contact to Mg(2+). Residue lysine 37 is part of the active site. Substrate is bound at residue serine 41. Residues aspartate 51 and glutamate 112 to glycine 115 contribute to the ATP site. Mg(2+)-binding residues include aspartate 51 and glutamate 112.

This sequence belongs to the dethiobiotin synthetase family. In terms of assembly, homodimer. Mg(2+) is required as a cofactor.

The protein localises to the cytoplasm. The enzyme catalyses (7R,8S)-7,8-diammoniononanoate + CO2 + ATP = (4R,5S)-dethiobiotin + ADP + phosphate + 3 H(+). The protein operates within cofactor biosynthesis; biotin biosynthesis; biotin from 7,8-diaminononanoate: step 1/2. Catalyzes a mechanistically unusual reaction, the ATP-dependent insertion of CO2 between the N7 and N8 nitrogen atoms of 7,8-diaminopelargonic acid (DAPA, also called 7,8-diammoniononanoate) to form a ureido ring. The polypeptide is ATP-dependent dethiobiotin synthetase BioD (Bacillus cereus (strain G9842)).